Consider the following 448-residue polypeptide: MDLRPELPTASSASQVHPGAAAAAAAASIPVSMAGNLLRGPPLLLRAADKYPRTPKCARCRNHGVVSALKGHKRYCRWKDCMCAKCTLIAERQRVMAAQVALRRQQAQEENEARELQLLYGTAEGLALAAANGIIPPRPNYEVFGSVNNETNSDSSIPKYELFSKSQLSGSATPQQSVGKPASTESDSAPGISSPEGRHGGSGSENGDSESFISSPVSKPIKDGEETPGSVSSLGSDSGSETDKDDQEPSPSSAASRHMNAIDILTRVFPSHKRSVQELVLQGCGKDVVRAIEQILNNSGAQGPNKTGPEETWTAERMLQNAQQLPQSSASTTTPTRPMLPGAMTLSNRSAFSPLQPNAPHFGADPSTYPLGTPLGLNPLRLAYSAHSRGLAFMTPYSTTGLMPTLGFRPPMDYAFSDLIRDRTMLHKEQGYASGLYGPLVNNTPDKQ.

The segment at residues 57 to 104 (CARCRNHGVVSALKGHKRYCRWKDCMCAKCTLIAERQRVMAAQVALRR) is a DNA-binding region (DM). Positions 166-187 (SQLSGSATPQQSVGKPASTESD) are enriched in polar residues. The interval 166–259 (SQLSGSATPQ…SPSSAASRHM (94 aa)) is disordered. The span at 229–239 (GSVSSLGSDSG) shows a compositional bias: low complexity. A DMA domain is found at 259–294 (MNAIDILTRVFPSHKRSVQELVLQGCGKDVVRAIEQ).

Belongs to the DMRT family.

It is found in the nucleus. May be involved in sexual development. This chain is Doublesex- and mab-3-related transcription factor A2 (dmrta2), found in Monopterus albus (Swamp eel).